The chain runs to 448 residues: Endoglucanase (448 aa).

A signal peptide spans Met-1 to Tyr-34. Substrate is bound by residues His-70, Trp-74–Tyr-75, Tyr-101, and His-137. Catalysis depends on Glu-175, which acts as the Proton donor. Tyr-237 lines the substrate pocket. Glu-263 serves as the catalytic Nucleophile. Substrate contacts are provided by residues Ala-269–Ser-270, Trp-297, and Lys-302–Glu-304.

Belongs to the glycosyl hydrolase 5 (cellulase A) family.

It carries out the reaction Endohydrolysis of (1-&gt;4)-beta-D-glucosidic linkages in cellulose, lichenin and cereal beta-D-glucans.. The sequence is that of Endoglucanase (eglA) from Clostridium saccharobutylicum.